Here is a 293-residue protein sequence, read N- to C-terminus: 33 kDa chaperonin (293 aa).

Disulfide bonds link C237/C239 and C271/C274.

It belongs to the HSP33 family. In terms of processing, under oxidizing conditions two disulfide bonds are formed involving the reactive cysteines. Under reducing conditions zinc is bound to the reactive cysteines and the protein is inactive.

It is found in the cytoplasm. In terms of biological role, redox regulated molecular chaperone. Protects both thermally unfolding and oxidatively damaged proteins from irreversible aggregation. Plays an important role in the bacterial defense system toward oxidative stress. The sequence is that of 33 kDa chaperonin from Haemophilus influenzae (strain PittEE).